The following is an 87-amino-acid chain: Small ribosomal subunit protein bS20 (87 aa).

Belongs to the bacterial ribosomal protein bS20 family.

In terms of biological role, binds directly to 16S ribosomal RNA. This is Small ribosomal subunit protein bS20 from Nitrosomonas europaea (strain ATCC 19718 / CIP 103999 / KCTC 2705 / NBRC 14298).